A 173-amino-acid chain; its full sequence is Mesencephalic astrocyte-derived neurotrophic factor homolog (173 aa).

The first 22 residues, 1-22, serve as a signal peptide directing secretion; that stretch reads MKTAHLVVVVCFLAGALQTAVA. 4 disulfides stabilise this stretch: C28–C114, C31–C103, C61–C72, and C148–C151.

The protein belongs to the ARMET family.

It is found in the secreted. Required during the maturation of the embryonic nervous system for maintenance of neuronal and cuticular connectivity. Essential for maintenance of dopaminergic neurons and dopamine levels. The sequence is that of Mesencephalic astrocyte-derived neurotrophic factor homolog from Drosophila ananassae (Fruit fly).